A 111-amino-acid polypeptide reads, in one-letter code: Nitrogen regulatory protein P-II (111 aa).

Y50 bears the O-UMP-tyrosine mark.

It belongs to the P(II) protein family. In terms of assembly, homotrimer.

Functionally, in nitrogen-limiting conditions, when the ratio of Gln to 2-ketoglutarate decreases, P-II is uridylylated to P-II-UMP. P-II-UMP allows the deadenylation of glutamine synthetase (GS), thus activating the enzyme. Conversely, in nitrogen excess P-II is deuridylated and promotes the adenylation of GS. P-II indirectly controls the transcription of the GS gene (glnA). P-II prevents NR-II-catalyzed conversion of NR-I to NR-I-phosphate, the transcriptional activator of glnA. When P-II is uridylylated to P-II-UMP, these events are reversed. The sequence is that of Nitrogen regulatory protein P-II (glnB) from Rhizobium leguminosarum bv. viciae.